We begin with the raw amino-acid sequence, 378 residues long: Glutamate 5-kinase (378 aa).

Position 19 (Lys-19) interacts with ATP. Substrate-binding residues include Ser-59, Asp-146, and Asn-158. An ATP-binding site is contributed by Thr-178–Asp-179. The PUA domain maps to Arg-285–Thr-363.

It belongs to the glutamate 5-kinase family.

The protein localises to the cytoplasm. The enzyme catalyses L-glutamate + ATP = L-glutamyl 5-phosphate + ADP. Its pathway is amino-acid biosynthesis; L-proline biosynthesis; L-glutamate 5-semialdehyde from L-glutamate: step 1/2. In terms of biological role, catalyzes the transfer of a phosphate group to glutamate to form L-glutamate 5-phosphate. The polypeptide is Glutamate 5-kinase (Polaromonas naphthalenivorans (strain CJ2)).